We begin with the raw amino-acid sequence, 452 residues long: Oxygen-independent coproporphyrinogen III oxidase (452 aa).

A Radical SAM core domain is found at 45–278; it reads LDPAVPISVY…ANLAAKMFTE (234 aa). An S-adenosyl-L-methionine-binding site is contributed by Tyr54. Positions 60 and 64 each coordinate [4Fe-4S] cluster. Phe66 is an S-adenosyl-L-methionine binding site. Cys67 lines the [4Fe-4S] cluster pocket. Residues Gly111, 112–113, Glu144, Gln171, Arg183, Asp208, Ala242, and Ile328 each bind S-adenosyl-L-methionine; that span reads GT.

This sequence belongs to the anaerobic coproporphyrinogen-III oxidase family. As to quaternary structure, monomer. [4Fe-4S] cluster is required as a cofactor.

Its subcellular location is the cytoplasm. It carries out the reaction coproporphyrinogen III + 2 S-adenosyl-L-methionine = protoporphyrinogen IX + 2 5'-deoxyadenosine + 2 L-methionine + 2 CO2. The protein operates within porphyrin-containing compound metabolism; protoporphyrin-IX biosynthesis; protoporphyrinogen-IX from coproporphyrinogen-III (AdoMet route): step 1/1. Functionally, involved in the heme and chlorophyll biosynthesis. Catalyzes the anaerobic oxidative decarboxylation of propionate groups of rings A and B of coproporphyrinogen III to yield the vinyl groups in protoporphyrinogen IX. The protein is Oxygen-independent coproporphyrinogen III oxidase (hemN) of Cereibacter sphaeroides (strain ATCC 17025 / ATH 2.4.3) (Rhodobacter sphaeroides).